The following is a 404-amino-acid chain: Putative Peroxidase 48 (404 aa).

The N-terminal stretch at 1–18 (MRFLGDYKFALLTCSVIA) is a signal peptide. Disulfide bonds link Cys-77–Cys-156, Cys-110–Cys-115, Cys-162–Cys-397, and Cys-241–Cys-273. The active-site Proton acceptor is the His-108. Ca(2+) contacts are provided by Asp-109, Ile-112, Gly-114, Asp-116, and Ser-118. A glycan (N-linked (GlcNAc...) asparagine) is linked at Asn-136. Position 204 (Pro-204) interacts with substrate. Residue His-234 coordinates heme b. Ser-235 is a binding site for Ca(2+). The N-linked (GlcNAc...) asparagine glycan is linked to Asn-250. Positions 276–307 (SVSTSSPSAPPDIGLPPSLPASDSENSYGMSS) are disordered. Positions 283–294 (SAPPDIGLPPSL) are enriched in pro residues. Ca(2+) is bound at residue Asp-287. The span at 296-307 (ASDSENSYGMSS) shows a compositional bias: polar residues.

The protein belongs to the peroxidase family. Classical plant (class III) peroxidase subfamily. The cofactor is heme b. Ca(2+) is required as a cofactor.

Its subcellular location is the secreted. The catalysed reaction is 2 a phenolic donor + H2O2 = 2 a phenolic radical donor + 2 H2O. Removal of H(2)O(2), oxidation of toxic reductants, biosynthesis and degradation of lignin, suberization, auxin catabolism, response to environmental stresses such as wounding, pathogen attack and oxidative stress. These functions might be dependent on each isozyme/isoform in each plant tissue. This chain is Putative Peroxidase 48 (PER48), found in Arabidopsis thaliana (Mouse-ear cress).